Consider the following 370-residue polypeptide: Mitogen-activated protein kinase 3 (370 aa).

The 288-residue stretch at 32 to 319 (YVPIKPIGRG…VTEALEHPYM (288 aa)) folds into the Protein kinase domain. Residues 38–46 (IGRGAYGIV) and K61 contribute to the ATP site. Residue D158 is the Proton acceptor of the active site. The residue at position 191 (T191) is a Phosphothreonine. A TXY motif is present at residues 191–193 (TEY). The residue at position 193 (Y193) is a Phosphotyrosine.

This sequence belongs to the protein kinase superfamily. CMGC Ser/Thr protein kinase family. MAP kinase subfamily. Dually phosphorylated on Thr-191 and Tyr-193, which activates the enzyme.

It catalyses the reaction L-seryl-[protein] + ATP = O-phospho-L-seryl-[protein] + ADP + H(+). It carries out the reaction L-threonyl-[protein] + ATP = O-phospho-L-threonyl-[protein] + ADP + H(+). With respect to regulation, activated by threonine and tyrosine phosphorylation. This chain is Mitogen-activated protein kinase 3 (MPK3), found in Oryza sativa subsp. japonica (Rice).